Reading from the N-terminus, the 186-residue chain is Large ribosomal subunit protein uL10 (186 aa).

This sequence belongs to the universal ribosomal protein uL10 family. As to quaternary structure, part of the ribosomal stalk of the 50S ribosomal subunit. The N-terminus interacts with L11 and the large rRNA to form the base of the stalk. The C-terminus forms an elongated spine to which L12 dimers bind in a sequential fashion forming a multimeric L10(L12)X complex.

Its function is as follows. Forms part of the ribosomal stalk, playing a central role in the interaction of the ribosome with GTP-bound translation factors. In Nitrosococcus oceani (strain ATCC 19707 / BCRC 17464 / JCM 30415 / NCIMB 11848 / C-107), this protein is Large ribosomal subunit protein uL10.